We begin with the raw amino-acid sequence, 390 residues long: DNA polymerase IV (390 aa).

One can recognise a UmuC domain in the interval 6 to 187 (VMHVDLDAFF…LDIAVMPGIG (182 aa)). Mg(2+) is bound by residues aspartate 10 and aspartate 105. Glutamate 106 is an active-site residue.

Belongs to the DNA polymerase type-Y family. As to quaternary structure, monomer. Mg(2+) is required as a cofactor.

Its subcellular location is the cytoplasm. The enzyme catalyses DNA(n) + a 2'-deoxyribonucleoside 5'-triphosphate = DNA(n+1) + diphosphate. Poorly processive, error-prone DNA polymerase involved in untargeted mutagenesis. Copies undamaged DNA at stalled replication forks, which arise in vivo from mismatched or misaligned primer ends. These misaligned primers can be extended by PolIV. Exhibits no 3'-5' exonuclease (proofreading) activity. May be involved in translesional synthesis, in conjunction with the beta clamp from PolIII. In Dehalococcoides mccartyi (strain CBDB1), this protein is DNA polymerase IV.